The sequence spans 86 residues: RNA-binding protein Hfq (86 aa).

The 60-residue stretch at 9 to 68 (DPYLNTLRKEKVPVSIYLVNGIKLQGSIESFDQFVVLLKNTVSQMVYKHAISTVVPARPV) folds into the Sm domain. The disordered stretch occupies residues 66-86 (RPVRLPSPTDSEHGDSEPGNA). Positions 75-86 (DSEHGDSEPGNA) are enriched in basic and acidic residues.

The protein belongs to the Hfq family. As to quaternary structure, homohexamer.

In terms of biological role, RNA chaperone that binds small regulatory RNA (sRNAs) and mRNAs to facilitate mRNA translational regulation in response to envelope stress, environmental stress and changes in metabolite concentrations. Also binds with high specificity to tRNAs. The protein is RNA-binding protein Hfq of Pseudomonas putida (strain ATCC 700007 / DSM 6899 / JCM 31910 / BCRC 17059 / LMG 24140 / F1).